We begin with the raw amino-acid sequence, 165 residues long: Histone H1-like protein HC2 (165 aa).

Basic residues-rich tracts occupy residues methionine 1 to alanine 50 and proline 59 to valine 80. The tract at residues methionine 1–valine 80 is disordered.

This sequence belongs to the histone H1/H5 family. HCT subfamily.

In terms of biological role, might have a role in establishing the nucleoid structure of elementary bodies. The sequence is that of Histone H1-like protein HC2 (hctB) from Chlamydia trachomatis.